The primary structure comprises 424 residues: Hemagglutinin-esterase (424 aa).

An N-terminal signal peptide occupies residues 1–16 (MFLLPRFVLVSCIIGS). The interval 7 to 127 (FVLVSCIIGS…SNDIWMQNKG (121 aa)) is esterase domain 1. At 17–392 (LGFDNPPTNV…PICVYDPLPI (376 aa)) the chain is on the virion surface side. The active-site Nucleophile is the serine 40. Residues cysteine 44 and cysteine 65 are joined by a disulfide bond. Asparagine 54, asparagine 89, asparagine 153, asparagine 236, and asparagine 301 each carry an N-linked (GlcNAc...) asparagine; by host glycan. Disulfide bonds link cysteine 113–cysteine 162, cysteine 197–cysteine 276, and cysteine 205–cysteine 249. The segment at 128 to 266 (LFYTQVYKNM…GNYLAISNEL (139 aa)) is receptor binding. The esterase domain 2 stretch occupies residues 267–379 (LLTVPTKAIC…RCPTAADINT (113 aa)). Cysteines 307 and 312 form a disulfide. An N-linked (GlcNAc...) asparagine; by host glycan is attached at asparagine 316. Residues aspartate 326 and histidine 329 each act as charge relay system in the active site. Cysteine 347 and cysteine 371 are oxidised to a cystine. Asparagine 358 is a glycosylation site (N-linked (GlcNAc...) asparagine; by host). Residues 393–413 (ILLGILLGVAVIIIVVLLLYF) traverse the membrane as a helical segment. At 414–424 (MVDNGTRLHDA) the chain is on the intravirion side. The N-linked (GlcNAc...) asparagine; by host glycan is linked to asparagine 417.

It belongs to the influenza type C/coronaviruses hemagglutinin-esterase family. As to quaternary structure, homodimer; disulfide-linked. Forms a complex with the M protein in the pre-Golgi. Associates then with S-M complex to form a ternary complex S-M-HE. In terms of processing, N-glycosylated in the host RER.

The protein localises to the virion membrane. It localises to the host cell membrane. The enzyme catalyses N-acetyl-9-O-acetylneuraminate + H2O = N-acetylneuraminate + acetate + H(+). The catalysed reaction is N-acetyl-4-O-acetylneuraminate + H2O = N-acetylneuraminate + acetate + H(+). Functionally, structural protein that makes short spikes at the surface of the virus. Contains receptor binding and receptor-destroying activities. Mediates de-O-acetylation of N-acetyl-4-O-acetylneuraminic acid, which is probably the receptor determinant recognized by the virus on the surface of erythrocytes and susceptible cells. This receptor-destroying activity is important for virus release as it probably helps preventing self-aggregation and ensures the efficient spread of the progeny virus from cell to cell. May serve as a secondary viral attachment protein for initiating infection, the spike protein being the major one. May become a target for both the humoral and the cellular branches of the immune system. In Bovine coronavirus (strain 98TXSF-110-LUN) (BCoV-LUN), this protein is Hemagglutinin-esterase.